Here is a 129-residue protein sequence, read N- to C-terminus: uncharacterized protein (129 aa).

Residues 1 to 28 (MAGTLFIILRFVDTTLPSSRVYCVRSLE) are Cytoplasmic-facing. A helical transmembrane segment spans residues 29-49 (VSVAVELAAATVLAFESIGVV). The Extracellular segment spans residues 50 to 54 (DDCGR). The chain crosses the membrane as a helical span at residues 55–75 (SVLFSIILIAAFICSVFLIAS). Topologically, residues 76-129 (EDIAGSRRSTGSCVTLWEGRNISFCLYRSNWLNTVPVGYMFFLRKNRSLDERYF) are cytoplasmic.

Its subcellular location is the membrane. This is an uncharacterized protein from Saccharomyces cerevisiae (strain ATCC 204508 / S288c) (Baker's yeast).